Here is a 1286-residue protein sequence, read N- to C-terminus: Galactose/N-acetyl-D-galactosamine lectin heavy subunit 2 (1286 aa).

An N-terminal signal peptide occupies residues 1-15; it reads MKLLLLNILLLCCLA. Topologically, residues 16–1227 are extracellular; it reads DKLNEFSADI…NNVGAIAAAT (1212 aa). N-linked (GlcNAc...) asparagine glycosylation is found at N200, N331, N384, N462, N652, N883, N1197, and N1207. The chain crosses the membrane as a helical span at residues 1228 to 1248; it reads TVAVVVVAVVVALIVVSIGLF. Over 1249–1286 the chain is Cytoplasmic; that stretch reads KTYQLVSSAMKNAITTTNENAEYVGADNEATNAATYNG.

Heterodimer composed of a 170 kDa heavy subunit (hgl) and a 31/35 kDa light subunit (lgl); disulfide-linked. In terms of processing, N-glycosylated.

The protein resides in the cell membrane. Functionally, lectin which binds galactose and N-acetyl-D-galactosamine of host glycoproteins and thus mediates adhesion to host cells. Mediates adherence to host colonic mucins, an essential step for pathogenic tissue invasion. The protein is Galactose/N-acetyl-D-galactosamine lectin heavy subunit 2 of Entamoeba histolytica (strain ATCC 30459 / HM-1:IMSS / ABRM).